Consider the following 553-residue polypeptide: ATP synthase F(1) complex subunit alpha, mitochondrial (553 aa).

The transit peptide at 1 to 43 (MLSVRVAAAVVRALPRRAGLVSRNALGSSFIAARNFHASNTHL) directs the protein to the mitochondrion. Phosphoserine is present on residues Ser-53 and Ser-65. Ser-76 carries the phosphoserine; alternate modification. O-linked (GlcNAc) serine; alternate glycosylation is present at Ser-76. Phosphoserine is present on Ser-106. Lys-123, Lys-126, and Lys-132 each carry N6-acetyllysine. Position 134 is a phosphothreonine (Thr-134). Lys-161 is modified (N6-acetyllysine; alternate). Lys-161 is modified (N6-succinyllysine; alternate). Ser-166 carries the post-translational modification Phosphoserine. Residue Lys-167 is modified to N6-acetyllysine; alternate. Lys-167 bears the N6-succinyllysine; alternate mark. Ser-184 is subject to Phosphoserine. At Arg-204 the chain carries Omega-N-methylarginine. ATP contacts are provided by Gln-215, Gly-217, Lys-218, Thr-219, and Ser-220. Thr-219 is a binding site for Mg(2+). Lys-230 and Lys-239 each carry N6-acetyllysine; alternate. N6-succinyllysine; alternate is present on residues Lys-230 and Lys-239. Lys-240 is modified (N6-acetyllysine). 2 positions are modified to N6-acetyllysine; alternate: Lys-261 and Lys-305. Residues Lys-261 and Lys-305 each carry the N6-succinyllysine; alternate modification. Residue Asp-312 participates in Mg(2+) binding. Lys-427 is subject to N6-acetyllysine; alternate. Lys-427 bears the N6-succinyllysine; alternate mark. Position 434 is an N6-acetyllysine (Lys-434). ATP is bound by residues Gln-473 and Gln-475. An N6-acetyllysine; alternate mark is found at Lys-498, Lys-506, Lys-531, and Lys-539. 4 positions are modified to N6-succinyllysine; alternate: Lys-498, Lys-506, Lys-531, and Lys-539. N6-acetyllysine is present on Lys-541.

It belongs to the ATPase alpha/beta chains family. As to quaternary structure, homotrimer. Component of the ATP synthase complex composed at least of ATP5F1A/subunit alpha, ATP5F1B/subunit beta, ATP5MC1/subunit c (homooctomer), MT-ATP6/subunit a, MT-ATP8/subunit 8, ATP5ME/subunit e, ATP5MF/subunit f, ATP5MG/subunit g, ATP5MK/subunit k, ATP5MJ/subunit j, ATP5F1C/subunit gamma, ATP5F1D/subunit delta, ATP5F1E/subunit epsilon, ATP5PF/subunit F6, ATP5PB/subunit b, ATP5PD/subunit d, ATP5PO/subunit OSCP. ATP synthase complex consists of a soluble F(1) head domain (subunits alpha(3) and beta(3)) - the catalytic core - and a membrane F(0) domain - the membrane proton channel (subunits c, a, 8, e, f, g, k and j). These two domains are linked by a central stalk (subunits gamma, delta, and epsilon) rotating inside the F1 region and a stationary peripheral stalk (subunits F6, b, d, and OSCP). Interacts with ATPAF2. Interacts with HRG; the interaction occurs on the surface of T-cells and alters the cell morphology when associated with concanavalin (in vitro). Interacts with PLG (angiostatin peptide); the interaction inhibits most of the angiogenic properties of angiostatin. Interacts with BLOC1S1. Interacts with BCL2L1 isoform BCL-X(L); the interaction mediates the association of BCL2L1 isoform BCL-X(L) with the mitochondrial membrane F(1)F(0) ATP synthase and enhances neurons metabolic efficiency. Interacts with CLN5 and PPT1. Interacts with S100A1; this interaction increases F1-ATPase activity. Interacts with ABCB7; this interaction allows the regulation of cellular iron homeostasis and cellular reactive oxygen species (ROS) levels in cardiomyocytes. Post-translationally, acetylated on lysine residues. BLOC1S1 is required for acetylation.

The protein localises to the mitochondrion inner membrane. It localises to the cell membrane. Its function is as follows. Subunit alpha, of the mitochondrial membrane ATP synthase complex (F(1)F(0) ATP synthase or Complex V) that produces ATP from ADP in the presence of a proton gradient across the membrane which is generated by electron transport complexes of the respiratory chain. ATP synthase complex consist of a soluble F(1) head domain - the catalytic core - and a membrane F(1) domain - the membrane proton channel. These two domains are linked by a central stalk rotating inside the F(1) region and a stationary peripheral stalk. During catalysis, ATP synthesis in the catalytic domain of F(1) is coupled via a rotary mechanism of the central stalk subunits to proton translocation. In vivo, can only synthesize ATP although its ATP hydrolase activity can be activated artificially in vitro. With the catalytic subunit beta (ATP5F1B), forms the catalytic core in the F(1) domain. Subunit alpha does not bear the catalytic high-affinity ATP-binding sites. The chain is ATP synthase F(1) complex subunit alpha, mitochondrial from Pan troglodytes (Chimpanzee).